The sequence spans 444 residues: Tryptophan 5-hydroxylase 1 (444 aa).

The 76-residue stretch at 19 to 94 (TLIFSLKNEV…NVLSVTPPDN (76 aa)) folds into the ACT domain. Ser58 is subject to Phosphoserine; by PKA. Residues Tyr235, Arg257, and Thr265 each contribute to the L-tryptophan site. His272, His277, and Glu317 together coordinate Fe cation. Residues Ser336 and Ile366 each coordinate L-tryptophan.

This sequence belongs to the biopterin-dependent aromatic amino acid hydroxylase family. In terms of assembly, homotetramer. Interacts with DNAJC12. Fe(2+) is required as a cofactor. Ubiquitinated, leading to its degradation by the proteasome. Ubiquitinated is triggered by phosphorylation. In terms of processing, phosphorylated; triggering degradation by the proteasome.

The enzyme catalyses (6R)-L-erythro-5,6,7,8-tetrahydrobiopterin + L-tryptophan + O2 = 5-hydroxy-L-tryptophan + (4aS,6R)-4a-hydroxy-L-erythro-5,6,7,8-tetrahydrobiopterin. The protein operates within aromatic compound metabolism; serotonin biosynthesis; serotonin from L-tryptophan: step 1/2. Oxidizes L-tryptophan to 5-hydroxy-l-tryptophan in the rate-determining step of serotonin biosynthesis. This chain is Tryptophan 5-hydroxylase 1 (TPH1), found in Oryctolagus cuniculus (Rabbit).